We begin with the raw amino-acid sequence, 130 residues long: Large ribosomal subunit protein bL12 (130 aa).

It belongs to the bacterial ribosomal protein bL12 family. As to quaternary structure, homodimer. Part of the ribosomal stalk of the 50S ribosomal subunit. Forms a multimeric L10(L12)X complex, where L10 forms an elongated spine to which 2 to 4 L12 dimers bind in a sequential fashion. Binds GTP-bound translation factors.

Forms part of the ribosomal stalk which helps the ribosome interact with GTP-bound translation factors. Is thus essential for accurate translation. The sequence is that of Large ribosomal subunit protein bL12 from Mycolicibacterium vanbaalenii (strain DSM 7251 / JCM 13017 / BCRC 16820 / KCTC 9966 / NRRL B-24157 / PYR-1) (Mycobacterium vanbaalenii).